Consider the following 239-residue polypeptide: uncharacterized protein (239 aa).

The S4 RNA-binding domain occupies 1–65; that stretch reads MRLDKLLANS…DYREFIYLMM (65 aa). The active-site Nucleophile is D103.

Belongs to the pseudouridine synthase RsuA family.

The catalysed reaction is a uridine in RNA = a pseudouridine in RNA. This is an uncharacterized protein from Bacillus subtilis (strain 168).